The following is a 308-amino-acid chain: Probable D,D-dipeptide transport ATP-binding protein DdpF (308 aa).

The ABC transporter domain occupies 8 to 243; it reads LRDVHINFPA…PAHPYTRLLL (236 aa). Residue 49–56 coordinates ATP; sequence GESGCGKS.

It belongs to the ABC transporter superfamily. As to quaternary structure, the complex is composed of two ATP-binding proteins (DdpD and DdpF), two transmembrane proteins (DdpB and DdpC) and a solute-binding protein (DdpA).

It is found in the cell inner membrane. Part of the ABC transporter complex DdpABCDF, which is probably involved in D,D-dipeptide transport. Probably responsible for energy coupling to the transport system. The sequence is that of Probable D,D-dipeptide transport ATP-binding protein DdpF from Escherichia coli (strain K12).